Here is a 120-residue protein sequence, read N- to C-terminus: Large ribosomal subunit protein uL18 (120 aa).

The protein belongs to the universal ribosomal protein uL18 family. Part of the 50S ribosomal subunit; part of the 5S rRNA/L5/L18/L25 subcomplex. Contacts the 5S and 23S rRNAs.

Its function is as follows. This is one of the proteins that bind and probably mediate the attachment of the 5S RNA into the large ribosomal subunit, where it forms part of the central protuberance. In Trichodesmium erythraeum (strain IMS101), this protein is Large ribosomal subunit protein uL18.